A 306-amino-acid polypeptide reads, in one-letter code: Mitochondrial brown fat uncoupling protein 1 (306 aa).

Residues 1-10 (MVGTTATDVA) lie on the Mitochondrial intermembrane side of the membrane. The chain crosses the membrane as a helical span at residues 11 to 32 (PTMGVKIFSAGVAACLADVITF). Solcar repeat units follow at residues 11–102 (PTMG…VQEF), 110–200 (PSLR…MKGA), and 209–294 (DDVP…LKRE). Over 33 to 73 (PLDTAKVRLQIQGECQTTSGIRYKGVLGTITTLAKTEGPLK) the chain is Mitochondrial matrix. Residue lysine 56 coordinates fatty acid 16:0. A helical transmembrane segment spans residues 74-96 (LYSGLPAGLQRQISFASLRIGLY). Topologically, residues 97-115 (DTVQEFWGGEEATPSLRSK) are mitochondrial intermembrane. A helical membrane pass occupies residues 116-132 (ICAGLTTGGVAVFIGQP). Topologically, residues 133 to 177 (TEVVKVRLQAQSHLHGLKPRYTGTYNAYRIIATTESLSTLWKGTT) are mitochondrial matrix. A helical membrane pass occupies residues 178 to 194 (PNLLRNIIINCTELVTY). Topologically, residues 195–211 (DLMKGALVRNDILADDV) are mitochondrial intermembrane. A helical membrane pass occupies residues 212-231 (PCHLLSALIAGFCTTLLSSP). Topologically, residues 232–265 (VDVVKTRFINSPQGQYTSVPSCAMSMLTKEGPTA) are mitochondrial matrix. Cysteine 253 is subject to Cysteine sulfenic acid (-SOH). Residues 266–288 (FFKGFAPSFLRLASWNVIMFVCF) form a helical membrane-spanning segment. Lysine 268 contacts fatty acid 16:0. At 289–306 (EKLKRELMKSRQTVDCAT) the chain is on the mitochondrial intermembrane side.

It belongs to the mitochondrial carrier (TC 2.A.29) family. As to quaternary structure, most probably functions as a monomer. Binds one purine nucleotide per monomer. However, has also been suggested to function as a homodimer or a homotetramer. Tightly associates with cardiolipin in the mitochondrion inner membrane; may stabilize and regulate its activity. Post-translationally, may undergo sulfenylation upon cold exposure. May increase the sensitivity of UCP1 thermogenic function to the activation by noradrenaline probably through structural effects. In terms of processing, may undergo ubiquitin-mediated proteasomal degradation.

It localises to the mitochondrion inner membrane. It carries out the reaction H(+)(in) = H(+)(out). Has no constitutive proton transporter activity and has to be activated by long-chain fatty acids/LCFAs. Inhibited by purine nucleotides. Both purine nucleotides and LCFAs bind the cytosolic side of the transporter and directly compete to activate or inhibit it. Activated by noradrenaline and reactive oxygen species. Despite lacking canonical translational encoding for selenocysteine, a small pool of the protein has been observed to selectively incorporate selenocysteine at 'Cys-253'. Selenocysteine-modified protein is highly sensitive to redox modification and may constitute a pool of protein highly sensitive to activation by elevated levels of reactive oxygen species (ROS). Mitochondrial protein responsible for thermogenic respiration, a specialized capacity of brown adipose tissue and beige fat that participates in non-shivering adaptive thermogenesis to temperature and diet variations and more generally to the regulation of energy balance. Functions as a long-chain fatty acid/LCFA and proton symporter, simultaneously transporting one LCFA and one proton through the inner mitochondrial membrane. However, LCFAs remaining associated with the transporter via their hydrophobic tails, it results in an apparent transport of protons activated by LCFAs. Thereby, dissipates the mitochondrial proton gradient and converts the energy of substrate oxydation into heat instead of ATP. Regulates the production of reactive oxygen species/ROS by mitochondria. The sequence is that of Mitochondrial brown fat uncoupling protein 1 from Ochotona dauurica (Daurian pika).